A 606-amino-acid polypeptide reads, in one-letter code: Phosphomethylpyrimidine synthase (606 aa).

Residues 1–13 (MTTADARTPASKQ) are compositionally biased toward polar residues. Disordered stretches follow at residues 1–49 (MTTA…SRPD) and 105–147 (AGRP…DGRP). Low complexity predominate over residues 14-31 (NDGTPDGTTPDAGTPNDG). The span at 105-117 (AGRPVRPEDDGLK) shows a compositional bias: basic and acidic residues. Substrate is bound by residues asparagine 213, methionine 242, tyrosine 271, histidine 307, 327–329 (SRG), 368–371 (DGLR), and glutamate 407. Histidine 411 contributes to the Zn(2+) binding site. Tyrosine 434 provides a ligand contact to substrate. Residue histidine 475 participates in Zn(2+) binding. [4Fe-4S] cluster is bound by residues cysteine 555, cysteine 558, and cysteine 563.

Belongs to the ThiC family. [4Fe-4S] cluster serves as cofactor.

The catalysed reaction is 5-amino-1-(5-phospho-beta-D-ribosyl)imidazole + S-adenosyl-L-methionine = 4-amino-2-methyl-5-(phosphooxymethyl)pyrimidine + CO + 5'-deoxyadenosine + formate + L-methionine + 3 H(+). It functions in the pathway cofactor biosynthesis; thiamine diphosphate biosynthesis. Functionally, catalyzes the synthesis of the hydroxymethylpyrimidine phosphate (HMP-P) moiety of thiamine from aminoimidazole ribotide (AIR) in a radical S-adenosyl-L-methionine (SAM)-dependent reaction. The chain is Phosphomethylpyrimidine synthase from Streptomyces griseus subsp. griseus (strain JCM 4626 / CBS 651.72 / NBRC 13350 / KCC S-0626 / ISP 5235).